A 357-amino-acid chain; its full sequence is CRISPR system Cms protein Csm5 (357 aa).

Belongs to the CRISPR-associated Csm5 family. As to quaternary structure, part of the Csm effector complex that includes at least Cas10(1), Csm2(3), Csm3(5), Csm4(1), Csm5(1) and mature crRNA. The Csm complex is elongated and slightly twisted with a maximal length of 215 Angstroms and a diameter of 75-80 Angstroms. It has been modeled to have a central protein filamant of Csm3 subunits along which the dsRNA helix of paired crRNA and target RNA binds. The filament is capped at one end by Cas10 and Csm4 and at the other end by Csm5; ssDNA is thought to bind to the N-terminal HD domain of Cas10. Csm with a precursor crRNA does not include Csm5, while Cas6, the enzyme probably involved in pre-crRNA processing, is found associated with a subset of the Csm complex.

Functionally, CRISPR (clustered regularly interspaced short palindromic repeat) is an adaptive immune system that provides protection against mobile genetic elements (viruses, transposable elements and conjugative plasmids). CRISPR clusters contain spacers, sequences complementary to antecedent mobile elements, and target invading nucleic acids. CRISPR clusters are transcribed and processed into CRISPR RNA (crRNA). The type III-A Csm effector complex binds crRNA and acts as a crRNA-guided RNase, DNase and cyclic oligoadenylate synthase; binding of target RNA cognate to the crRNA is required for all activities. In a heterologous host this Csm effector complex restricts ssRNA phage MS2, suggesting it may target RNA viruses in vivo. In terms of biological role, csm functions as a non-specific ssDNase. Base-pairing between crRNA and target RNA to form a ternary Csm complex activates a ssDNase activity; target RNA cleavage suppresses the ssDNase, a temporal control that prevents uncontrolled DNA degradation. Viral RNA transcripts probably tether the Csm complex to the viral genome, recruiting Cas10 ssDNA activity which is able to degrade DNA in the transcription bubble, spatially controlling the DNase activity. This subunit might be involved in maturation of a crRNA intermediate to its mature form. The sequence is that of CRISPR system Cms protein Csm5 from Streptococcus thermophilus.